The sequence spans 468 residues: Cysteine--tRNA ligase (468 aa).

Cys-28 is a Zn(2+) binding site. The 'HIGH' region signature appears at Pro-30 to Asn-40. The Zn(2+) site is built by Cys-212, His-237, and Glu-241. The 'KMSKS' region signature appears at Lys-271 to Ser-275. Lys-274 lines the ATP pocket.

This sequence belongs to the class-I aminoacyl-tRNA synthetase family. Monomer. Zn(2+) is required as a cofactor.

Its subcellular location is the cytoplasm. It catalyses the reaction tRNA(Cys) + L-cysteine + ATP = L-cysteinyl-tRNA(Cys) + AMP + diphosphate. The protein is Cysteine--tRNA ligase of Lacticaseibacillus casei (strain BL23) (Lactobacillus casei).